Reading from the N-terminus, the 137-residue chain is Universal stress protein in QAH/OAS sulfhydrylase 3'region (137 aa).

The protein belongs to the universal stress protein A family.

The protein is Universal stress protein in QAH/OAS sulfhydrylase 3'region of Thermus aquaticus.